The following is a 319-amino-acid chain: BTB/POZ domain-containing adapter for CUL3-mediated RhoA degradation protein 2 (319 aa).

The region spanning 31–99 (KYIRLNVGGC…LRDDTITLPK (69 aa)) is the BTB domain.

It belongs to the BACURD family. As to quaternary structure, component of the BCR(TNFAIP1) E3 ubiquitin ligase complex, at least composed of cul3, tnfaip1/bacurd2 and rbx1.

It is found in the cytoplasm. It localises to the nucleus. The protein resides in the endosome. The protein operates within protein modification; protein ubiquitination. Functionally, substrate-specific adapter of a BCR (BTB-CUL3-RBX1) E3 ubiquitin-protein ligase complex involved in regulation of cytoskeleton structure. The BCR(TNFAIP1) E3 ubiquitin ligase complex mediates the ubiquitination of target proteins, leading to their degradation by the proteasome. This chain is BTB/POZ domain-containing adapter for CUL3-mediated RhoA degradation protein 2 (tnfaip1), found in Xenopus tropicalis (Western clawed frog).